The primary structure comprises 407 residues: Phosphopentomutase (407 aa).

Mn(2+) contacts are provided by D10, D306, H311, D347, H348, and H359.

It belongs to the phosphopentomutase family. Requires Mn(2+) as cofactor.

It is found in the cytoplasm. The enzyme catalyses 2-deoxy-alpha-D-ribose 1-phosphate = 2-deoxy-D-ribose 5-phosphate. The catalysed reaction is alpha-D-ribose 1-phosphate = D-ribose 5-phosphate. It participates in carbohydrate degradation; 2-deoxy-D-ribose 1-phosphate degradation; D-glyceraldehyde 3-phosphate and acetaldehyde from 2-deoxy-alpha-D-ribose 1-phosphate: step 1/2. Isomerase that catalyzes the conversion of deoxy-ribose 1-phosphate (dRib-1-P) and ribose 1-phosphate (Rib-1-P) to deoxy-ribose 5-phosphate (dRib-5-P) and ribose 5-phosphate (Rib-5-P), respectively. The chain is Phosphopentomutase from Serratia proteamaculans (strain 568).